The following is a 327-amino-acid chain: Alkanal monooxygenase beta chain (327 aa).

It belongs to the bacterial luciferase oxidoreductase family. As to quaternary structure, heterodimer of an alpha and a beta chain.

The catalysed reaction is a long-chain fatty aldehyde + FMNH2 + O2 = a long-chain fatty acid + hnu + FMN + H2O + 2 H(+). Its function is as follows. Light-emitting reaction in luminous bacteria. The specific role of the beta subunit is unknown, but it is absolutely required for bioluminescence activity. This is Alkanal monooxygenase beta chain (luxB) from Photorhabdus luminescens (Xenorhabdus luminescens).